The following is a 356-amino-acid chain: Probable scoulerine-9-O-methyltransferase OMT2B (356 aa).

Met173 is a binding site for S-adenosyl-L-methionine. Asp176 lines the substrate pocket. S-adenosyl-L-methionine-binding positions include Thr177, Gly202, Asp225, 245–246 (DI), and Lys259. 260 to 264 (YVLHN) contributes to the substrate binding site. The active-site Proton acceptor is His263.

The protein belongs to the class I-like SAM-binding methyltransferase superfamily. Cation-independent O-methyltransferase family. COMT subfamily.

It catalyses the reaction (S)-scoulerine + S-adenosyl-L-methionine = (S)-tetrahydrocolumbamine + S-adenosyl-L-homocysteine + H(+). It participates in alkaloid biosynthesis. In terms of biological role, methyltransferase involved in the biosynthesis of the benzylisoquinoline alkaloid noscapine. Catalyzes the conversion of (S)-scoulerine to (S)-tetrahydrocolumbamine. The heterodimers OMT2B-SOMT3 and OMT2B-6OMT do not possess 3-O-acetyl-4'-O-demethylpapaveroxine 4'-O-methyltransferase activity. The chain is Probable scoulerine-9-O-methyltransferase OMT2B from Papaver somniferum (Opium poppy).